The chain runs to 387 residues: Phosphoglycerate kinase (387 aa).

Substrate contacts are provided by residues 21–23 (DLN), Arg36, 59–62 (HLGR), Arg113, and Arg146. ATP is bound by residues Lys197, Glu314, and 340–343 (GGDT).

It belongs to the phosphoglycerate kinase family. Monomer.

It is found in the cytoplasm. The enzyme catalyses (2R)-3-phosphoglycerate + ATP = (2R)-3-phospho-glyceroyl phosphate + ADP. It functions in the pathway carbohydrate degradation; glycolysis; pyruvate from D-glyceraldehyde 3-phosphate: step 2/5. The chain is Phosphoglycerate kinase (pgk) from Pasteurella multocida (strain Pm70).